The primary structure comprises 366 residues: Anhydro-N-acetylmuramic acid kinase (366 aa).

Residue 10–17 participates in ATP binding; that stretch reads GTSMDGID.

It belongs to the anhydro-N-acetylmuramic acid kinase family.

It catalyses the reaction 1,6-anhydro-N-acetyl-beta-muramate + ATP + H2O = N-acetyl-D-muramate 6-phosphate + ADP + H(+). It functions in the pathway amino-sugar metabolism; 1,6-anhydro-N-acetylmuramate degradation. Its pathway is cell wall biogenesis; peptidoglycan recycling. Catalyzes the specific phosphorylation of 1,6-anhydro-N-acetylmuramic acid (anhMurNAc) with the simultaneous cleavage of the 1,6-anhydro ring, generating MurNAc-6-P. Is required for the utilization of anhMurNAc either imported from the medium or derived from its own cell wall murein, and thus plays a role in cell wall recycling. The protein is Anhydro-N-acetylmuramic acid kinase of Legionella pneumophila (strain Lens).